The sequence spans 432 residues: MAKNVVVLGTQWGDEGKGKVVDLLTDRAKYVVRYQGGHNAGHTLVIDGEKTVLHLIPSGILRDNVTCIIGNGVVLSPDALMKEMTMLEERGVPVRERLKISEACPLILPYHIALDVAREKARGAKAIGTTGRGIGPAYEDKVARRGLRVGDLFNAEDFAAKLKEVLDVHNFTLTQYYGEEAVDFEETLNGAMEVADILKAMVVDVTDELDKAHKAGLPIMFEGAQGTLLDIDHGTYPYVTSSNTTVGGVATGAGFGPLKLDYVLGIVKAYTTRVGSGPFPTELDCEVGQHLGVKGHEFGATTGRKRRTGWFDAVAMKRAVQINSITGFCLTKLDVLDGLESLQICVGYKDADGNVKDVPPMAADGYDKVTPVYEEMPGWTDNTFGVTEFEGLPQAAKNYIKRLEELTGVPVDIVSTGPDRNETIVLRSPYDA.

GTP contacts are provided by residues 13–19 (GDEGKGK) and 41–43 (GHT). Aspartate 14 acts as the Proton acceptor in catalysis. Residues aspartate 14 and glycine 41 each coordinate Mg(2+). Residues 14–17 (DEGK), 39–42 (NAGH), threonine 130, arginine 144, glutamine 225, threonine 240, and arginine 304 each bind IMP. Histidine 42 functions as the Proton donor in the catalytic mechanism. Residue 300–306 (ATTGRKR) coordinates substrate. GTP contacts are provided by residues arginine 306, 332–334 (KLD), and 415–417 (STG).

This sequence belongs to the adenylosuccinate synthetase family. In terms of assembly, homodimer. Mg(2+) is required as a cofactor.

The protein localises to the cytoplasm. The enzyme catalyses IMP + L-aspartate + GTP = N(6)-(1,2-dicarboxyethyl)-AMP + GDP + phosphate + 2 H(+). Its pathway is purine metabolism; AMP biosynthesis via de novo pathway; AMP from IMP: step 1/2. Its function is as follows. Plays an important role in the de novo pathway of purine nucleotide biosynthesis. Catalyzes the first committed step in the biosynthesis of AMP from IMP. In Alteromonas mediterranea (strain DSM 17117 / CIP 110805 / LMG 28347 / Deep ecotype), this protein is Adenylosuccinate synthetase.